A 773-amino-acid polypeptide reads, in one-letter code: Ribosomal protein S6 kinase alpha-4 (773 aa).

In terms of domain architecture, Protein kinase 1 spans F33–F301. ATP contacts are provided by residues L39–V47 and K65. D161 acts as the Proton acceptor in catalysis. Residue S196 is modified to Phosphoserine; by autocatalysis. Positions Q302 to N371 constitute an AGC-kinase C-terminal domain. Residue S343 is modified to Phosphoserine; by MAPK1, MAPK3 and MAPK14. S347 is subject to Phosphoserine. 2 positions are modified to phosphoserine; by autocatalysis: S360 and S365. ATP is bound by residues L417–C425 and K440. The region spanning L417–L674 is the Protein kinase 2 domain. Residue D530 is the Proton acceptor of the active site. T542 carries the post-translational modification Phosphothreonine. T568 is subject to Phosphothreonine; by MAPK1, MAPK3 and MAPK14. A phosphoserine mark is found at S634 and S678. Disordered regions lie at residues L674–P696 and A728–S773. The residue at position 687 (T687) is a Phosphothreonine. Phosphoserine; by autocatalysis occurs at positions 737 and 745.

The protein belongs to the protein kinase superfamily. AGC Ser/Thr protein kinase family. S6 kinase subfamily. Forms a complex with either MAPK1/ERK2 or MAPK3/ERK1 in quiescent cells which transiently dissociates following mitogenic stimulation. Also associates with MAPK14/p38-alpha. Activated RPS6KA4 associates with and phosphorylates the NF-kappa-B p65 subunit RELA. It depends on Mg(2+) as a cofactor. In terms of processing, ser-343 and Thr-568 phosphorylation is required for kinase activity. Ser-343 and Ser-196 are autophosphorylated by the C-terminal kinase domain, and their phosphorylation is essential for the catalytic activity of the N-terminal kinase domain. Phosphorylated at Ser-343, Thr-568 and Thr-687 by MAPK1/ERK2, MAPK3/ERK1 and MAPK14/p38-alpha. Autophosphorylated at Ser-737 and Ser-745 by the N-terminal kinase domain.

It is found in the nucleus. The enzyme catalyses L-seryl-[protein] + ATP = O-phospho-L-seryl-[protein] + ADP + H(+). It carries out the reaction L-threonyl-[protein] + ATP = O-phospho-L-threonyl-[protein] + ADP + H(+). With respect to regulation, activated by phosphorylation at Ser-343, Thr-568 and Thr-687 by MAPK1/ERK2, MAPK3/ERK1 and MAPK14/p38-alpha, and by further autophosphorylation of Ser-196, Ser-360 and Ser-365 by the activated C-terminal kinase domain. Its function is as follows. Serine/threonine-protein kinase that is required for the mitogen or stress-induced phosphorylation of the transcription factors CREB1 and ATF1 and for the regulation of the transcription factor RELA, and that contributes to gene activation by histone phosphorylation and functions in the regulation of inflammatory genes. Phosphorylates CREB1 and ATF1 in response to mitogenic or stress stimuli such as UV-C irradiation, epidermal growth factor (EGF) and anisomycin. Plays an essential role in the control of RELA transcriptional activity in response to TNF. Phosphorylates 'Ser-10' of histone H3 in response to mitogenics, stress stimuli and EGF, which results in the transcriptional activation of several immediate early genes, including proto-oncogenes c-fos/FOS and c-jun/JUN. May also phosphorylate 'Ser-28' of histone H3. Mediates the mitogen- and stress-induced phosphorylation of high mobility group protein 1 (HMGN1/HMG14). In lipopolysaccharide-stimulated primary macrophages, acts downstream of the Toll-like receptor TLR4 to limit the production of pro-inflammatory cytokines. Functions probably by inducing transcription of the MAP kinase phosphatase DUSP1 and the anti-inflammatory cytokine interleukin 10 (IL10), via CREB1 and ATF1 transcription factors. In Mus musculus (Mouse), this protein is Ribosomal protein S6 kinase alpha-4 (Rps6ka4).